We begin with the raw amino-acid sequence, 357 residues long: Putative DNA directed RNA polymerase subunit R470 (357 aa).

Belongs to the archaeal Rpo11/eukaryotic RPB11/RPC19 RNA polymerase subunit family.

It localises to the virion. The catalysed reaction is RNA(n) + a ribonucleoside 5'-triphosphate = RNA(n+1) + diphosphate. This Acanthamoeba polyphaga mimivirus (APMV) protein is Putative DNA directed RNA polymerase subunit R470.